An 88-amino-acid polypeptide reads, in one-letter code: Putative septation protein SpoVG (88 aa).

This sequence belongs to the SpoVG family.

Functionally, could be involved in septation. The sequence is that of Putative septation protein SpoVG from Caldicellulosiruptor bescii (strain ATCC BAA-1888 / DSM 6725 / KCTC 15123 / Z-1320) (Anaerocellum thermophilum).